Here is a 614-residue protein sequence, read N- to C-terminus: UvrABC system protein C (614 aa).

The region spanning 26–104 (NLPGVYKMLG…IKEYRPPYNV (79 aa)) is the GIY-YIG domain. In terms of domain architecture, UVR spans 215–250 (SDIHSALIEKMEASAEELDFEKAVFYRDQLSMLREV).

This sequence belongs to the UvrC family. In terms of assembly, interacts with UvrB in an incision complex.

The protein resides in the cytoplasm. In terms of biological role, the UvrABC repair system catalyzes the recognition and processing of DNA lesions. UvrC both incises the 5' and 3' sides of the lesion. The N-terminal half is responsible for the 3' incision and the C-terminal half is responsible for the 5' incision. The polypeptide is UvrABC system protein C (Psychrobacter arcticus (strain DSM 17307 / VKM B-2377 / 273-4)).